An 86-amino-acid polypeptide reads, in one-letter code: Large ribosomal subunit protein bL27 (86 aa).

The segment covering 1–10 (MAQKKGGGST) has biased composition (gly residues). The disordered stretch occupies residues 1 to 21 (MAQKKGGGSTRNGRDSESKRL).

Belongs to the bacterial ribosomal protein bL27 family.

The chain is Large ribosomal subunit protein bL27 from Ralstonia pickettii (strain 12J).